A 147-amino-acid polypeptide reads, in one-letter code: UPF0178 protein AFE_3267 (147 aa).

Belongs to the UPF0178 family.

This chain is UPF0178 protein AFE_3267, found in Acidithiobacillus ferrooxidans (strain ATCC 23270 / DSM 14882 / CIP 104768 / NCIMB 8455) (Ferrobacillus ferrooxidans (strain ATCC 23270)).